The chain runs to 457 residues: Heme sensor protein HssS (457 aa).

A run of 2 helical transmembrane segments spans residues 9–29 and 164–184; these read IAIY…VLTN and TFLA…VIAS. Residues 186-238 enclose the HAMP domain; sequence YSIIRPVKKLKLATERLIDGDFETPIKQTRKDEIGTLQYHFNKMRESLGQVDQ. The 211-residue stretch at 246 to 456 folds into the Histidine kinase domain; it reads NVSHEIKTPL…TFTITLPNNS (211 aa). His249 is subject to Phosphohistidine; by autocatalysis.

Autophosphorylated.

The protein localises to the cell membrane. It carries out the reaction ATP + protein L-histidine = ADP + protein N-phospho-L-histidine.. Its function is as follows. Member of the two-component regulatory system HssS/HssR involved in intracellular heme homeostasis and tempering of staphylococcal virulence. HssS functions as a heme sensor histidine kinase which is autophosphorylated at a histidine residue and transfers its phosphate group to an aspartate residue of HssR. HssR/HssS activates the expression of hrtAB, an efflux pump, in response to extracellular heme, hemin, hemoglobin or blood. The sequence is that of Heme sensor protein HssS (hssS) from Staphylococcus aureus (strain USA300).